The primary structure comprises 380 residues: Succinyl-diaminopimelate desuccinylase (380 aa).

His71 contributes to the Zn(2+) binding site. Asp73 is a catalytic residue. Asp104 is a binding site for Zn(2+). Glu138 acts as the Proton acceptor in catalysis. Zn(2+) is bound by residues Glu139, Glu167, and His353.

Belongs to the peptidase M20A family. DapE subfamily. In terms of assembly, homodimer. Requires Zn(2+) as cofactor. Co(2+) serves as cofactor.

The catalysed reaction is N-succinyl-(2S,6S)-2,6-diaminopimelate + H2O = (2S,6S)-2,6-diaminopimelate + succinate. The protein operates within amino-acid biosynthesis; L-lysine biosynthesis via DAP pathway; LL-2,6-diaminopimelate from (S)-tetrahydrodipicolinate (succinylase route): step 3/3. Catalyzes the hydrolysis of N-succinyl-L,L-diaminopimelic acid (SDAP), forming succinate and LL-2,6-diaminopimelate (DAP), an intermediate involved in the bacterial biosynthesis of lysine and meso-diaminopimelic acid, an essential component of bacterial cell walls. The polypeptide is Succinyl-diaminopimelate desuccinylase (Shewanella baltica (strain OS185)).